A 596-amino-acid chain; its full sequence is Nitrite reductase (596 aa).

The signal sequence occupies residues Met1 to Ala29. Residues Gln30–Pro76 are N-terminal tail. Position 46 (His46) interacts with heme c. Positions 54 and 57 each coordinate heme d1. The Cytochrome c domain occupies Ala77 to Ala162. Cys94, Cys97, His98, Lys108, and Tyr122 together coordinate heme c. Heme d1 contacts are provided by Trp138, Arg203, His229, Arg232, Arg245, Arg272, Tyr292, Arg420, Gln536, and Thr583. The interval Pro163–Tyr596 is D1-heme domain.

Homodimer. The cofactor is heme c. Requires heme as cofactor.

It localises to the periplasm. It carries out the reaction nitric oxide + Fe(III)-[cytochrome c] + H2O = Fe(II)-[cytochrome c] + nitrite + 2 H(+). The catalysed reaction is A + NH4(+) + H2O = hydroxylamine + AH2 + H(+). Functionally, inactivation of this cytochrome oxidase results in the loss of nitrite and nitric oxide reductase activities, but not of nitrous oxide reductase activity. This Paracoccus denitrificans (strain Pd 1222) protein is Nitrite reductase (nirS).